The primary structure comprises 296 residues: Glycerol-3-phosphate dehydrogenase [NAD(P)+] (296 aa).

W12, R31, and K80 together coordinate NADPH. Sn-glycerol 3-phosphate is bound by residues K80, G108, and S110. A112 provides a ligand contact to NADPH. Sn-glycerol 3-phosphate contacts are provided by K162, D215, S225, R226, and N227. The active-site Proton acceptor is the K162. R226 is an NADPH binding site. V250 and E252 together coordinate NADPH.

Belongs to the NAD-dependent glycerol-3-phosphate dehydrogenase family.

The protein resides in the cytoplasm. The catalysed reaction is sn-glycerol 3-phosphate + NAD(+) = dihydroxyacetone phosphate + NADH + H(+). The enzyme catalyses sn-glycerol 3-phosphate + NADP(+) = dihydroxyacetone phosphate + NADPH + H(+). It participates in membrane lipid metabolism; glycerophospholipid metabolism. Functionally, catalyzes the reduction of the glycolytic intermediate dihydroxyacetone phosphate (DHAP) to sn-glycerol 3-phosphate (G3P), the key precursor for phospholipid synthesis. This is Glycerol-3-phosphate dehydrogenase [NAD(P)+] from Sulfurimonas denitrificans (strain ATCC 33889 / DSM 1251) (Thiomicrospira denitrificans (strain ATCC 33889 / DSM 1251)).